We begin with the raw amino-acid sequence, 426 residues long: ORC1-type DNA replication protein 1 (426 aa).

ATP contacts are provided by residues 62–66 (VGKTL), Tyr211, and Arg223.

Belongs to the CDC6/cdc18 family.

Involved in regulation of DNA replication. The sequence is that of ORC1-type DNA replication protein 1 (cdc6a) from Haloarcula marismortui (strain ATCC 43049 / DSM 3752 / JCM 8966 / VKM B-1809) (Halobacterium marismortui).